Here is a 591-residue protein sequence, read N- to C-terminus: Glutathione hydrolase (591 aa).

The N-terminal stretch at Met-1–Pro-41 is a signal peptide. Arg-122 contributes to the L-glutamate binding site. 3 N-linked (GlcNAc...) asparagine glycosylation sites follow: Asn-135, Asn-270, and Asn-389. The active-site Nucleophile is the Thr-393. Residues Thr-411, Glu-432, and Ser-464–Ala-465 contribute to the L-glutamate site. Residue Asn-534 is glycosylated (N-linked (GlcNAc...) asparagine).

Belongs to the gamma-glutamyltransferase family.

It carries out the reaction an N-terminal (5-L-glutamyl)-[peptide] + an alpha-amino acid = 5-L-glutamyl amino acid + an N-terminal L-alpha-aminoacyl-[peptide]. The enzyme catalyses glutathione + H2O = L-cysteinylglycine + L-glutamate. The catalysed reaction is an S-substituted glutathione + H2O = an S-substituted L-cysteinylglycine + L-glutamate. It participates in mycotoxin biosynthesis. Functionally, gamma-glutamyltransferase; part of the gene cluster that mediates the biosynthesis of the secondary metabolite ustiloxin B, an antimitotic tetrapeptide. First, ustA is processed by the subtilisin-like endoprotease Kex2 that is outside the ustiloxin B gene cluster, at the C-terminal side of Arg-Lys, after transfer to Golgi apparatus through the endoplasmic reticulum (ER). Cleavage by KEX2 generates 16 peptides YAIG-I to YAIG-XVI. To process the precursor peptide further, at least two peptidases are necessary to cleave the N-terminal and C-terminal sides of the Tyr-Ala-Ile-Gly core peptide which serves as backbone for the synthesis of ustiloxin B, through cyclization and modification of the tyrosine with a non-protein coding amino acid, norvaline. One of the two peptidases must be the serine peptidase ustP; and the other pepdidase is probably ustH. Macrocyclization of the core peptide derived from ustA requires the tyrosinase ustQ, as well as the homologous oxidases ustYa and ustYb, and leads to the production of the first cyclization product N-desmethylustiloxin F. For the formation of N-desmethylustiloxin F, three oxidation steps are required, hydroxylation at the benzylic position, hydroxylation at either the aromatic ring of Tyr or beta-position of Ile, and oxidative cyclization. UstQ may catalyze the oxidation of a phenol moiety, whereas the ustYa and ustYb are most likely responsible for the remaining two-step oxidations. N-desmethylustiloxin F is then methylated by ustM to yield ustiloxin F which in turn substrate of the cytochrome P450 monooxygenase ustC which catalyzes the formation of S-deoxyustiloxin H. The flavoprotein monooxygenases ustF1 and ustF2 then participate in the modification of the side chain of S-deoxyustiloxin H, leading to the synthesis of an oxime intermediate, via ustiloxin H. Finally, carboxylative dehydration performed by the cysteine desulfurase-like protein ustD yields ustiloxin B. The sequence is that of Glutathione hydrolase from Aspergillus flavus (strain ATCC 200026 / FGSC A1120 / IAM 13836 / NRRL 3357 / JCM 12722 / SRRC 167).